The primary structure comprises 186 residues: Peptide deformylase (186 aa).

Fe cation is bound by residues C99 and H141. The active site involves E142. Residue H145 coordinates Fe cation.

This sequence belongs to the polypeptide deformylase family. Fe(2+) is required as a cofactor.

It carries out the reaction N-terminal N-formyl-L-methionyl-[peptide] + H2O = N-terminal L-methionyl-[peptide] + formate. Functionally, removes the formyl group from the N-terminal Met of newly synthesized proteins. Requires at least a dipeptide for an efficient rate of reaction. N-terminal L-methionine is a prerequisite for activity but the enzyme has broad specificity at other positions. The polypeptide is Peptide deformylase (Chlamydia pneumoniae (Chlamydophila pneumoniae)).